The following is a 189-amino-acid chain: GTPase HRas (189 aa).

A GTP-binding site is contributed by 10–17 (GARGVGKS). Positions 32–40 (YDPTIEDSY) match the Effector region motif. GTP is bound by residues 57–61 (DTAGQ) and 116–119 (NKCD). Residues C181 and C184 are each lipidated (S-palmitoyl cysteine; by host). C186 bears the Cysteine methyl ester; by host mark. C186 carries S-farnesyl cysteine; by host lipidation. A propeptide spans 187-189 (VLS) (removed in mature form).

Belongs to the small GTPase superfamily. Ras family.

Its subcellular location is the host cell membrane. The enzyme catalyses GTP + H2O = GDP + phosphate + H(+). With respect to regulation, alternates between an inactive form bound to GDP and an active form bound to GTP. Activated by a guanine nucleotide-exchange factor (GEF) and inactivated by a GTPase-activating protein (GAP). This is GTPase HRas (H-RAS) from Mus musculus (Mouse).